Here is a 50-residue protein sequence, read N- to C-terminus: Large ribosomal subunit protein bL33 (50 aa).

This sequence belongs to the bacterial ribosomal protein bL33 family.

This chain is Large ribosomal subunit protein bL33, found in Citrifermentans bemidjiense (strain ATCC BAA-1014 / DSM 16622 / JCM 12645 / Bem) (Geobacter bemidjiensis).